Consider the following 260-residue polypeptide: Magnesium dechelatase SGRL, chloroplastic (260 aa).

The N-terminal 45 residues, 1–45, are a transit peptide targeting the chloroplast; the sequence is MACYIVPYYHHPVLSHPNREIFSHRHHHHHRFCNNLLNRRISVPR.

It belongs to the staygreen family. Interacts with the light harvesting complex II (LHCII). Interacts with the chlorophyll catabolic enzymes (CCEs) NYC1, NOL, PAO and RCCR. As to expression, expressed in cotyledons, pollen and young leaves.

The protein localises to the plastid. It localises to the chloroplast thylakoid. It catalyses the reaction chlorophyllide a + 2 H(+) = pheophorbide a + Mg(2+). Its function is as follows. Magnesium chelatase involved in chlorophyll a degradation in the chlorophyll-protein complexes of photosystem I (PSI) and photosystem II (PSII). Contributes to the degradation of PSI and PSII in the thylakoid membranes. Recombinant SGRL possesses high dechelating activity against chlorophyllide a, very low activity against chlorophyll a, and no activity against chlorophyll b. Contributes to abiotic stress-induced chlorophyll degradation and leaf yellowing during vegetative plant growth. The protein is Magnesium dechelatase SGRL, chloroplastic of Arabidopsis thaliana (Mouse-ear cress).